Reading from the N-terminus, the 905-residue chain is Protein translocase subunit SecA (905 aa).

Residues Q89, 107–111 (GEGKT), and D502 contribute to the ATP site. The segment at 837–885 (EQTDVGDPILNDQNKKNSSTLWTPSQENKFVNPKDRNPSDSTTWGKVGR) is disordered. The span at 852–865 (KNSSTLWTPSQENK) shows a compositional bias: polar residues. 4 residues coordinate Zn(2+): C889, C891, C900, and H901.

The protein belongs to the SecA family. In terms of assembly, monomer and homodimer. Part of the essential Sec protein translocation apparatus which comprises SecA, SecYEG and auxiliary proteins SecDF-YajC and YidC. Zn(2+) is required as a cofactor.

The protein localises to the cell inner membrane. It localises to the cytoplasm. It carries out the reaction ATP + H2O + cellular proteinSide 1 = ADP + phosphate + cellular proteinSide 2.. Its function is as follows. Part of the Sec protein translocase complex. Interacts with the SecYEG preprotein conducting channel. Has a central role in coupling the hydrolysis of ATP to the transfer of proteins into and across the cell membrane, serving both as a receptor for the preprotein-SecB complex and as an ATP-driven molecular motor driving the stepwise translocation of polypeptide chains across the membrane. The chain is Protein translocase subunit SecA from Bartonella henselae (strain ATCC 49882 / DSM 28221 / CCUG 30454 / Houston 1) (Rochalimaea henselae).